We begin with the raw amino-acid sequence, 310 residues long: MKPKIFIDGEHGTTGLQIRTRLAERDDLEVISIPEAERRNKDLRADYLRAADIAILCLPDDASKEAVSLLEGHNSTRIIDTSTAHRVHPDWAYGFAELAKGQRERIAEARLVANPGCYPTGAIALVRPLCDAGLLPADYPVSVNAVSGYTGGGKQLIAQMEDRNHPDYLAANNFLYGLPLKHKHVPELQLHGRLDRRPIFSPSVGRFPQGMIVQVPLFLSELEGSPSLAKVHAVLTEHYAGQDIVEVVPLEESAKLPRVDAEELAGKDGMKLFVFGTEDHGQVNLVALLDNLGKGASGAAVQNMNLMLGK.

C117 is a catalytic residue.

Belongs to the NAGSA dehydrogenase family. Type 2 subfamily.

It localises to the cytoplasm. It catalyses the reaction N-acetyl-L-glutamate 5-semialdehyde + phosphate + NADP(+) = N-acetyl-L-glutamyl 5-phosphate + NADPH + H(+). Its pathway is amino-acid biosynthesis; L-arginine biosynthesis; N(2)-acetyl-L-ornithine from L-glutamate: step 3/4. Functionally, catalyzes the NADPH-dependent reduction of N-acetyl-5-glutamyl phosphate to yield N-acetyl-L-glutamate 5-semialdehyde. This chain is N-acetyl-gamma-glutamyl-phosphate reductase, found in Brucella ovis (strain ATCC 25840 / 63/290 / NCTC 10512).